A 151-amino-acid polypeptide reads, in one-letter code: Ubiquitin-conjugating enzyme E2 2 (151 aa).

The tract at residues 1-26 is disordered; the sequence is MSTSARRRLMRDFKRMQTDPPAGVSA. Residues 4 to 150 enclose the UBC core domain; it reads SARRRLMRDF…VRETVEKSWE (147 aa). Cys-88 functions as the Glycyl thioester intermediate in the catalytic mechanism.

It belongs to the ubiquitin-conjugating enzyme family.

The protein localises to the cytoplasm. It localises to the nucleus. It carries out the reaction S-ubiquitinyl-[E1 ubiquitin-activating enzyme]-L-cysteine + [E2 ubiquitin-conjugating enzyme]-L-cysteine = [E1 ubiquitin-activating enzyme]-L-cysteine + S-ubiquitinyl-[E2 ubiquitin-conjugating enzyme]-L-cysteine.. It participates in protein modification; protein ubiquitination. Catalyzes the covalent attachment of ubiquitin to other proteins. Plays a role in transcription regulation by catalyzing the monoubiquitination of histone H2B to form H2BK123ub1. H2BK123ub1 gives a specific tag for epigenetic transcriptional activation and is also a prerequisite for H3K4me and H3K79me formation. Also involved in postreplication repair of UV-damaged DNA, in N-end rule-dependent protein degradation and in sporulation. The protein is Ubiquitin-conjugating enzyme E2 2 (uvsJ) of Emericella nidulans (strain FGSC A4 / ATCC 38163 / CBS 112.46 / NRRL 194 / M139) (Aspergillus nidulans).